A 305-amino-acid chain; its full sequence is Sulfate adenylyltransferase subunit 2 (305 aa).

The protein belongs to the PAPS reductase family. CysD subfamily. In terms of assembly, heterodimer composed of CysD, the smaller subunit, and CysN.

The catalysed reaction is sulfate + ATP + H(+) = adenosine 5'-phosphosulfate + diphosphate. It participates in sulfur metabolism; hydrogen sulfide biosynthesis; sulfite from sulfate: step 1/3. Functionally, with CysN forms the ATP sulfurylase (ATPS) that catalyzes the adenylation of sulfate producing adenosine 5'-phosphosulfate (APS) and diphosphate, the first enzymatic step in sulfur assimilation pathway. APS synthesis involves the formation of a high-energy phosphoric-sulfuric acid anhydride bond driven by GTP hydrolysis by CysN coupled to ATP hydrolysis by CysD. This chain is Sulfate adenylyltransferase subunit 2, found in Azotobacter vinelandii (strain DJ / ATCC BAA-1303).